The primary structure comprises 218 residues: GTP cyclohydrolase 1 (218 aa).

The Zn(2+) site is built by C111, H114, and C182.

This sequence belongs to the GTP cyclohydrolase I family. As to quaternary structure, toroid-shaped homodecamer, composed of two pentamers of five dimers.

The enzyme catalyses GTP + H2O = 7,8-dihydroneopterin 3'-triphosphate + formate + H(+). It functions in the pathway cofactor biosynthesis; 7,8-dihydroneopterin triphosphate biosynthesis; 7,8-dihydroneopterin triphosphate from GTP: step 1/1. This Buchnera aphidicola subsp. Schizaphis graminum (strain Sg) protein is GTP cyclohydrolase 1.